The chain runs to 142 residues: MAKKIESYIKLQVAAQEANPSPPVGPALGQHGVNIMEFCKAFNSKTQEINKGMKVPVVITVYSDRSFSFVTKTPPAALLILKIIDIKKGSGSPHLDKVGSITRAQLEEVASMKMKDLNANNMDSAVNIIAGTARSMGIMVEG.

It belongs to the universal ribosomal protein uL11 family. Part of the ribosomal stalk of the 50S ribosomal subunit. Interacts with L10 and the large rRNA to form the base of the stalk. L10 forms an elongated spine to which L12 dimers bind in a sequential fashion forming a multimeric L10(L12)X complex. One or more lysine residues are methylated.

In terms of biological role, forms part of the ribosomal stalk which helps the ribosome interact with GTP-bound translation factors. This is Large ribosomal subunit protein uL11 from Vesicomyosocius okutanii subsp. Calyptogena okutanii (strain HA).